The chain runs to 167 residues: Endoribonuclease YbeY (167 aa).

Zn(2+)-binding residues include histidine 131, histidine 135, and histidine 141.

Belongs to the endoribonuclease YbeY family. It depends on Zn(2+) as a cofactor.

Its subcellular location is the cytoplasm. Its function is as follows. Single strand-specific metallo-endoribonuclease involved in late-stage 70S ribosome quality control and in maturation of the 3' terminus of the 16S rRNA. This is Endoribonuclease YbeY from Rickettsia akari (strain Hartford).